We begin with the raw amino-acid sequence, 299 residues long: Putative arsenical pump-driving ATPase 2 (299 aa).

Residue 8–15 (GKGGVGKT) coordinates ATP.

It belongs to the arsA ATPase family.

It catalyses the reaction arsenite(in) + ATP + H2O = arsenite(out) + ADP + phosphate + H(+). In terms of biological role, anion-transporting ATPase. Catalyzes the extrusion of arsenite. This is Putative arsenical pump-driving ATPase 2 (arsA2) from Aquifex aeolicus (strain VF5).